The primary structure comprises 668 residues: Biosynthetic arginine decarboxylase (668 aa).

Position 105 is an N6-(pyridoxal phosphate)lysine (lysine 105). 286–296 (LDVGGGLGVDY) serves as a coordination point for substrate.

This sequence belongs to the Orn/Lys/Arg decarboxylase class-II family. SpeA subfamily. Mg(2+) serves as cofactor. Requires pyridoxal 5'-phosphate as cofactor.

It catalyses the reaction L-arginine + H(+) = agmatine + CO2. In terms of biological role, catalyzes the biosynthesis of agmatine from arginine. In Rhodopirellula baltica (strain DSM 10527 / NCIMB 13988 / SH1), this protein is Biosynthetic arginine decarboxylase.